A 502-amino-acid polypeptide reads, in one-letter code: Galactose/methyl galactoside import ATP-binding protein MglA (502 aa).

ABC transporter domains follow at residues L10 to E245 and N255 to L502. An ATP-binding site is contributed by G42–S49.

It belongs to the ABC transporter superfamily. Galactose/methyl galactoside importer (TC 3.A.1.2.3) family. The complex is composed of one ATP-binding protein (MglA), two transmembrane proteins (MglC) and a solute-binding protein (MglB).

It localises to the cell inner membrane. The enzyme catalyses D-galactose(out) + ATP + H2O = D-galactose(in) + ADP + phosphate + H(+). The catalysed reaction is methyl beta-D-galactoside(out) + ATP + H2O = methyl beta-D-galactoside(in) + ADP + phosphate + H(+). In terms of biological role, part of the ABC transporter complex MglABC involved in galactose/methyl galactoside import. Responsible for energy coupling to the transport system. The chain is Galactose/methyl galactoside import ATP-binding protein MglA from Vibrio cholerae serotype O1 (strain ATCC 39315 / El Tor Inaba N16961).